We begin with the raw amino-acid sequence, 178 residues long: tRNA (cytidine(56)-2'-O)-methyltransferase (178 aa).

S-adenosyl-L-methionine is bound by residues Leu84, 109-113 (GAEKV), and 127-134 (IGNQPHSE).

The protein belongs to the aTrm56 family. Homodimer.

It is found in the cytoplasm. It carries out the reaction cytidine(56) in tRNA + S-adenosyl-L-methionine = 2'-O-methylcytidine(56) in tRNA + S-adenosyl-L-homocysteine + H(+). Functionally, specifically catalyzes the AdoMet-dependent 2'-O-ribose methylation of cytidine at position 56 in tRNAs. This is tRNA (cytidine(56)-2'-O)-methyltransferase from Methanococcoides burtonii (strain DSM 6242 / NBRC 107633 / OCM 468 / ACE-M).